The sequence spans 523 residues: Siroheme synthase (523 aa).

The tract at residues 1–203 (MNTFPLFFKL…GNENEAIAQL (203 aa)) is precorrin-2 dehydrogenase /sirohydrochlorin ferrochelatase. Residues 22 to 23 (DV) and 43 to 44 (PS) contribute to the NAD(+) site. Phosphoserine is present on serine 128. The segment at 231-523 (GEVYIVGAGP…DGGLEQLVID (293 aa)) is uroporphyrinogen-III C-methyltransferase. Proline 240 lines the S-adenosyl-L-methionine pocket. Aspartate 263 acts as the Proton acceptor in catalysis. Residue lysine 285 is the Proton donor of the active site. S-adenosyl-L-methionine-binding positions include 316 to 318 (GGD), isoleucine 321, 346 to 347 (TA), methionine 398, and alanine 427.

In the N-terminal section; belongs to the precorrin-2 dehydrogenase / sirohydrochlorin ferrochelatase family. The protein in the C-terminal section; belongs to the precorrin methyltransferase family.

It carries out the reaction uroporphyrinogen III + 2 S-adenosyl-L-methionine = precorrin-2 + 2 S-adenosyl-L-homocysteine + H(+). The catalysed reaction is precorrin-2 + NAD(+) = sirohydrochlorin + NADH + 2 H(+). It catalyses the reaction siroheme + 2 H(+) = sirohydrochlorin + Fe(2+). It participates in cofactor biosynthesis; adenosylcobalamin biosynthesis; precorrin-2 from uroporphyrinogen III: step 1/1. Its pathway is cofactor biosynthesis; adenosylcobalamin biosynthesis; sirohydrochlorin from precorrin-2: step 1/1. The protein operates within porphyrin-containing compound metabolism; siroheme biosynthesis; precorrin-2 from uroporphyrinogen III: step 1/1. It functions in the pathway porphyrin-containing compound metabolism; siroheme biosynthesis; siroheme from sirohydrochlorin: step 1/1. It participates in porphyrin-containing compound metabolism; siroheme biosynthesis; sirohydrochlorin from precorrin-2: step 1/1. In terms of biological role, multifunctional enzyme that catalyzes the SAM-dependent methylations of uroporphyrinogen III at position C-2 and C-7 to form precorrin-2 via precorrin-1. Then it catalyzes the NAD-dependent ring dehydrogenation of precorrin-2 to yield sirohydrochlorin. Finally, it catalyzes the ferrochelation of sirohydrochlorin to yield siroheme. The polypeptide is Siroheme synthase (Psychrobacter cryohalolentis (strain ATCC BAA-1226 / DSM 17306 / VKM B-2378 / K5)).